Consider the following 651-residue polypeptide: MBT domain-containing protein 1 (651 aa).

Positions 21–55 are disordered; sequence SFGMFDGYDSCSEDTSSSSSSDESEEEVAPLPSSL. The span at 29 to 41 shows a compositional bias: low complexity; that stretch reads DSCSEDTSSSSSS. The FCS-type zinc finger occupies 68–103; that stretch reads PDGKSGMATCEMCGMVGVRDAFYSKTKRFCSVSCSR. Positions 77, 80, 97, and 101 each coordinate Zn(2+). MBT repeat units lie at residues 164–268, 276–373, 374–479, and 487–583; these read FSWG…LVPP, TNWK…IGHR, FKRT…LTPP, and FKWF…LQPP. Disordered regions lie at residues 581–610 and 629–651; these read QPPAPQSNKDSQSNISKQKKKSKSQPYKGH and TFLQGASDQESNGSGSYYIKQEP. The span at 586–596 shows a compositional bias: low complexity; it reads QSNKDSQSNIS. Positions 597–610 are enriched in basic residues; that stretch reads KQKKKSKSQPYKGH. The span at 632 to 643 shows a compositional bias: polar residues; the sequence is QGASDQESNGSG.

As to quaternary structure, monomer. Component of the NuA4 histone acetyltransferase complex.

It is found in the nucleus. The protein localises to the chromosome. Functionally, chromatin reader component of the NuA4 histone acetyltransferase complex, a multiprotein complex involved in transcriptional activation of select genes principally by acetylation of nucleosomal histones H4 and H2A. The NuA4 complex plays a direct role in repair of DNA double-strand breaks (DSBs) by promoting homologous recombination (HR). MBTD1 specifically recognizes and binds monomethylated and dimethylated 'Lys-20' on histone H4 (H4K20me1 and H4K20me2, respectively). In the NuA4 complex, MBTD1 promotes recruitment of the complex to H4K20me marks by competing with TP53BP1 for binding to H4K20me. Following recruitment to H4K20me at DNA breaks, the NuA4 complex catalyzes acetylation of 'Lys-15' on histone H2A (H2AK15), blocking the ubiquitination mark required for TP53BP1 localization at DNA breaks, thereby promoting homologous recombination (HR). The polypeptide is MBT domain-containing protein 1 (Xenopus tropicalis (Western clawed frog)).